A 199-amino-acid polypeptide reads, in one-letter code: Peptidyl-tRNA hydrolase (199 aa).

Residue Tyr-15 participates in tRNA binding. His-20 functions as the Proton acceptor in the catalytic mechanism. Positions 66, 68, and 114 each coordinate tRNA.

The protein belongs to the PTH family. Monomer.

The protein resides in the cytoplasm. It carries out the reaction an N-acyl-L-alpha-aminoacyl-tRNA + H2O = an N-acyl-L-amino acid + a tRNA + H(+). Hydrolyzes ribosome-free peptidyl-tRNAs (with 1 or more amino acids incorporated), which drop off the ribosome during protein synthesis, or as a result of ribosome stalling. Its function is as follows. Catalyzes the release of premature peptidyl moieties from peptidyl-tRNA molecules trapped in stalled 50S ribosomal subunits, and thus maintains levels of free tRNAs and 50S ribosomes. This is Peptidyl-tRNA hydrolase from Burkholderia cenocepacia (strain HI2424).